A 342-amino-acid polypeptide reads, in one-letter code: Vancomycin B-type resistance protein VanB (342 aa).

ATP is bound by residues Lys132, 168–170 (FVK), 176–177 (SS), 206–213 (EQAISGCE), and Phe240. The 202-residue stretch at 136-337 (YILTKNAGIA…LPALIDSLIT (202 aa)) folds into the ATP-grasp domain. Substrate is bound at residue His243. An ATP-binding site is contributed by 303 to 304 (NE). The Mg(2+) site is built by Glu304 and Asn306.

This sequence belongs to the D-alanine--D-alanine ligase family. Mg(2+) is required as a cofactor. Requires Mn(2+) as cofactor.

The protein localises to the cell membrane. The catalysed reaction is (R)-lactate + D-alanine + ATP = D-alanyl-(R)-lactate + ADP + phosphate. Required for high-level resistance to glycopeptides antibiotics. D-Ala--D-Ala ligase of altered specificity which catalyzes ester bond formation between D-Ala and various D-hydroxy acids; producing a peptidoglycan which does not terminate in D-alanine but in D-lactate, thus preventing vancomycin binding. This is Vancomycin B-type resistance protein VanB (vanB) from Enterococcus faecalis (strain ATCC 700802 / V583).